A 310-amino-acid chain; its full sequence is Olfactory receptor 5H14 (310 aa).

Residues 1–28 (MEEENATLLTEFVLTGFLYQPQWKIPLF) lie on the Extracellular side of the membrane. Asn-5 is a glycosylation site (N-linked (GlcNAc...) asparagine). The chain crosses the membrane as a helical span at residues 29 to 49 (LAFLVIYLITIMGNLGLIAVI). The Cytoplasmic portion of the chain corresponds to 50-56 (WKDPHLH). The chain crosses the membrane as a helical span at residues 57 to 77 (IPMYLLLGNLAFVDALLSSSV). The Extracellular portion of the chain corresponds to 78-98 (TLKMLINFLAKSKMISLSECK). Cys-97 and Cys-179 are oxidised to a cystine. The chain crosses the membrane as a helical span at residues 99-119 (IQLFSFAISVTTECFLLATMA). Residues 120–143 (YDRYVAICKPLLYPAIMTNGLCIR) are Cytoplasmic-facing. A helical membrane pass occupies residues 144-164 (LLILSYVGGLLHALIHEGFLF). The Extracellular segment spans residues 165 to 195 (RLTFCNSNIIQHFYCDIIPLLKISYTDSSIN). The chain crosses the membrane as a helical span at residues 196-216 (FLMVFIFAGSIQVFTIGTVLI). Residues 217–240 (SYIFVLYTILKKKSVKGMRKAFST) lie on the Cytoplasmic side of the membrane. Residues 241–261 (CGAHLLSVSLYYGPLAFMYMG) traverse the membrane as a helical segment. The Extracellular portion of the chain corresponds to 262-271 (SASPQADDQD). A helical membrane pass occupies residues 272–292 (MMESLFYTVIVPLLNPMIYSL). Residues 293 to 310 (RNKQVIASFTKMFKRNDV) lie on the Cytoplasmic side of the membrane.

Belongs to the G-protein coupled receptor 1 family.

The protein localises to the cell membrane. Functionally, odorant receptor. This Homo sapiens (Human) protein is Olfactory receptor 5H14 (OR5H14).